The primary structure comprises 375 residues: MDIEERINLVLKKPTEEVLTVENLRHLFEVGAPLQHYIGFEISGYIHLGTGLMAGAKIADFQKAGIKTRIFLADWHSWINDKLGGDLEVIQEVALKYFKVGMEKSIEVMGGDPKKVEFVLASEILENGDYWQTVIDISKNVTLSRVMRSITIMGRQMGESIDFAKLIYPMMQVADIFYQGVTIAHAGMDQRKAHVIAIEVAQKLKYHPIVHNGEKLKPVAVHHHLLLGLQEPPVWPITSEEQFKEIKAQMKMSKSKPYSAVFIHDSPEEIKQKLRKAFCPAREVNYNPVLDWAEHIIFREEPTEFTIHRPAKFGGDVTYTTFEELKKDFAEGKLHPLDLKNAVAEYLIELLKPIREYFERHPEPLELMRSVKITR.

L-tyrosine-binding residues include Tyr-37, Tyr-168, Gln-172, Asp-175, and Gln-190. The 'KMSKS' region signature appears at 251 to 255 (KMSKS). Lys-254 serves as a coordination point for ATP.

Belongs to the class-I aminoacyl-tRNA synthetase family. TyrS type 4 subfamily. Homodimer.

It localises to the cytoplasm. The catalysed reaction is tRNA(Tyr) + L-tyrosine + ATP = L-tyrosyl-tRNA(Tyr) + AMP + diphosphate + H(+). In terms of biological role, catalyzes the attachment of tyrosine to tRNA(Tyr) in a two-step reaction: tyrosine is first activated by ATP to form Tyr-AMP and then transferred to the acceptor end of tRNA(Tyr). The protein is Tyrosine--tRNA ligase of Pyrococcus abyssi (strain GE5 / Orsay).